We begin with the raw amino-acid sequence, 521 residues long: Cholesterol side-chain cleavage enzyme, mitochondrial (521 aa).

A mitochondrion-targeting transit peptide spans 1-39 (MLAKGLPPRSVLVKGCQTFLSAPKERLGHLRVPTSEGAG). Cysteine 462 provides a ligand contact to heme.

The protein belongs to the cytochrome P450 family. In terms of assembly, interacts with FDX1/adrenodoxin. Heme serves as cofactor.

It is found in the mitochondrion inner membrane. It catalyses the reaction 6 reduced [adrenodoxin] + cholesterol + 3 O2 + 6 H(+) = 4-methylpentanal + pregnenolone + 6 oxidized [adrenodoxin] + 4 H2O. The catalysed reaction is 2 reduced [adrenodoxin] + cholesterol + O2 + 2 H(+) = (22R)-hydroxycholesterol + 2 oxidized [adrenodoxin] + H2O. It carries out the reaction (22R)-hydroxycholesterol + 2 reduced [adrenodoxin] + O2 + 2 H(+) = (20R,22R)-20,22-dihydroxycholesterol + 2 oxidized [adrenodoxin] + H2O. The enzyme catalyses (20R,22R)-20,22-dihydroxycholesterol + 2 reduced [adrenodoxin] + O2 + 2 H(+) = 4-methylpentanal + pregnenolone + 2 oxidized [adrenodoxin] + 2 H2O. It functions in the pathway lipid metabolism; C21-steroid hormone metabolism. It participates in steroid metabolism; cholesterol metabolism. Functionally, a cytochrome P450 monooxygenase that catalyzes the side-chain hydroxylation and cleavage of cholesterol to pregnenolone, the precursor of most steroid hormones. Catalyzes three sequential oxidation reactions of cholesterol, namely the hydroxylation at C22 followed with the hydroxylation at C20 to yield 20R,22R-hydroxycholesterol that is further cleaved between C20 and C22 to yield the C21-steroid pregnenolone and 4-methylpentanal. Mechanistically, uses molecular oxygen inserting one oxygen atom into a substrate and reducing the second into a water molecule. Two electrons are provided by NADPH via a two-protein mitochondrial transfer system comprising flavoprotein FDXR (adrenodoxin/ferredoxin reductase) and nonheme iron-sulfur protein FDX1 or FDX2 (adrenodoxin/ferredoxin). The protein is Cholesterol side-chain cleavage enzyme, mitochondrial (CYP11A1) of Macaca fascicularis (Crab-eating macaque).